Reading from the N-terminus, the 287-residue chain is ATP synthase gamma chain (287 aa).

The protein belongs to the ATPase gamma chain family. As to quaternary structure, F-type ATPases have 2 components, CF(1) - the catalytic core - and CF(0) - the membrane proton channel. CF(1) has five subunits: alpha(3), beta(3), gamma(1), delta(1), epsilon(1). CF(0) has three main subunits: a, b and c.

Its subcellular location is the cell inner membrane. In terms of biological role, produces ATP from ADP in the presence of a proton gradient across the membrane. The gamma chain is believed to be important in regulating ATPase activity and the flow of protons through the CF(0) complex. The sequence is that of ATP synthase gamma chain from Edwardsiella ictaluri (strain 93-146).